A 400-amino-acid chain; its full sequence is Carbamoyl phosphate synthase small chain (400 aa).

The tract at residues M1–A199 is CPSase. S66, G250, and G252 together coordinate L-glutamine. The Glutamine amidotransferase type-1 domain occupies R200–N395. Residue C278 is the Nucleophile of the active site. Residues F279, Q282, N320, G322, and F323 each coordinate L-glutamine. Active-site residues include H368 and E370.

Belongs to the CarA family. As to quaternary structure, composed of two chains; the small (or glutamine) chain promotes the hydrolysis of glutamine to ammonia, which is used by the large (or ammonia) chain to synthesize carbamoyl phosphate. Tetramer of heterodimers (alpha,beta)4.

The enzyme catalyses hydrogencarbonate + L-glutamine + 2 ATP + H2O = carbamoyl phosphate + L-glutamate + 2 ADP + phosphate + 2 H(+). It catalyses the reaction L-glutamine + H2O = L-glutamate + NH4(+). Its pathway is amino-acid biosynthesis; L-arginine biosynthesis; carbamoyl phosphate from bicarbonate: step 1/1. It participates in pyrimidine metabolism; UMP biosynthesis via de novo pathway; (S)-dihydroorotate from bicarbonate: step 1/3. Small subunit of the glutamine-dependent carbamoyl phosphate synthetase (CPSase). CPSase catalyzes the formation of carbamoyl phosphate from the ammonia moiety of glutamine, carbonate, and phosphate donated by ATP, constituting the first step of 2 biosynthetic pathways, one leading to arginine and/or urea and the other to pyrimidine nucleotides. The small subunit (glutamine amidotransferase) binds and cleaves glutamine to supply the large subunit with the substrate ammonia. This is Carbamoyl phosphate synthase small chain from Corynebacterium efficiens (strain DSM 44549 / YS-314 / AJ 12310 / JCM 11189 / NBRC 100395).